We begin with the raw amino-acid sequence, 1215 residues long: Pesticidal crystal protein Cry1Ka (1215 aa).

It belongs to the delta endotoxin family.

Functionally, promotes colloidosmotic lysis by binding to the midgut epithelial cells of insects. Selectively toxic to Artogeia rapae but not active on Plutella xylostella. This chain is Pesticidal crystal protein Cry1Ka (cry1Ka), found in Bacillus thuringiensis subsp. morrisoni.